The following is an 843-amino-acid chain: Protein P (843 aa).

The interval 1-177 (MPLSYPHFRK…FCGSQYSWEQ (177 aa)) is terminal protein domain (TP). Residues 178-346 (ELQHGSTSLN…YCLSHIINLL (169 aa)) form a spacer region. Disordered regions lie at residues 228–255 (KQGQ…RWPA) and 284–314 (EANP…SVGS). The span at 239 to 249 (RSGRLRSRVHT) shows a compositional bias: basic residues. Residues 347-690 (EDWGPCYEHG…YMNLYPVARQ (344 aa)) are polymerase/reverse transcriptase domain (RT). The 244-residue stretch at 357–600 (EHHIRTPRTP…YNLHFMGYVI (244 aa)) folds into the Reverse transcriptase domain. Residues D429, D551, and D552 each contribute to the Mg(2+) site.

It belongs to the hepadnaviridae P protein family.

It carries out the reaction DNA(n) + a 2'-deoxyribonucleoside 5'-triphosphate = DNA(n+1) + diphosphate. The catalysed reaction is Endonucleolytic cleavage to 5'-phosphomonoester.. Its activity is regulated as follows. Activated by host HSP70 and HSP40 in vitro to be able to bind the epsilon loop of the pgRNA. Because deletion of the RNase H region renders the protein partly chaperone-independent, the chaperones may be needed indirectly to relieve occlusion of the RNA-binding site by this domain. Inhibited by several reverse-transcriptase inhibitors: Lamivudine, Adefovir and Entecavir. Its function is as follows. Multifunctional enzyme that converts the viral RNA genome into dsDNA in viral cytoplasmic capsids. This enzyme displays a DNA polymerase activity that can copy either DNA or RNA templates, and a ribonuclease H (RNase H) activity that cleaves the RNA strand of RNA-DNA heteroduplexes in a partially processive 3'- to 5'-endonucleasic mode. Neo-synthesized pregenomic RNA (pgRNA) are encapsidated together with the P protein, and reverse-transcribed inside the nucleocapsid. Initiation of reverse-transcription occurs first by binding the epsilon loop on the pgRNA genome, and is initiated by protein priming, thereby the 5'-end of (-)DNA is covalently linked to P protein. Partial (+)DNA is synthesized from the (-)DNA template and generates the relaxed circular DNA (RC-DNA) genome. After budding and infection, the RC-DNA migrates in the nucleus, and is converted into a plasmid-like covalently closed circular DNA (cccDNA). The activity of P protein does not seem to be necessary for cccDNA generation, and is presumably released from (+)DNA by host nuclear DNA repair machinery. The chain is Protein P from Hepatitis B virus genotype F2 subtype adw4q (isolate Senegal/9203) (HBV-F).